A 332-amino-acid chain; its full sequence is Biotin synthase (332 aa).

Positions 53-282 constitute a Radical SAM core domain; the sequence is HFGKKVKLNM…TKEIRISGGR (230 aa). 3 residues coordinate [4Fe-4S] cluster: Cys71, Cys75, and Cys78. Residues Cys115, Cys147, Cys207, and Arg277 each contribute to the [2Fe-2S] cluster site.

Belongs to the radical SAM superfamily. Biotin synthase family. Homodimer. The cofactor is [4Fe-4S] cluster. [2Fe-2S] cluster is required as a cofactor.

The catalysed reaction is (4R,5S)-dethiobiotin + (sulfur carrier)-SH + 2 reduced [2Fe-2S]-[ferredoxin] + 2 S-adenosyl-L-methionine = (sulfur carrier)-H + biotin + 2 5'-deoxyadenosine + 2 L-methionine + 2 oxidized [2Fe-2S]-[ferredoxin]. Its pathway is cofactor biosynthesis; biotin biosynthesis; biotin from 7,8-diaminononanoate: step 2/2. Its function is as follows. Catalyzes the conversion of dethiobiotin (DTB) to biotin by the insertion of a sulfur atom into dethiobiotin via a radical-based mechanism. This chain is Biotin synthase, found in Bacillus cereus (strain ATCC 14579 / DSM 31 / CCUG 7414 / JCM 2152 / NBRC 15305 / NCIMB 9373 / NCTC 2599 / NRRL B-3711).